Consider the following 680-residue polypeptide: Chaperone protein dnaK3 (680 aa).

T205 carries the post-translational modification Phosphothreonine; by autocatalysis. Positions 640 to 680 (GRERRRDDDEDEWAEPPRTRRSRSYSQRADSAPWDDWDDDW) are disordered.

Belongs to the heat shock protein 70 family.

Its function is as follows. Acts as a chaperone. The protein is Chaperone protein dnaK3 (dnaK3) of Thermosynechococcus vestitus (strain NIES-2133 / IAM M-273 / BP-1).